Consider the following 142-residue polypeptide: Nucleoside diphosphate kinase (142 aa).

Residues Lys11, Phe59, Arg87, Thr93, Arg104, and Asn114 each coordinate ATP. His117 functions as the Pros-phosphohistidine intermediate in the catalytic mechanism.

Belongs to the NDK family. Mg(2+) is required as a cofactor.

The protein resides in the cytoplasm. The enzyme catalyses a 2'-deoxyribonucleoside 5'-diphosphate + ATP = a 2'-deoxyribonucleoside 5'-triphosphate + ADP. The catalysed reaction is a ribonucleoside 5'-diphosphate + ATP = a ribonucleoside 5'-triphosphate + ADP. Its function is as follows. Major role in the synthesis of nucleoside triphosphates other than ATP. The ATP gamma phosphate is transferred to the NDP beta phosphate via a ping-pong mechanism, using a phosphorylated active-site intermediate. This chain is Nucleoside diphosphate kinase, found in Hyperthermus butylicus (strain DSM 5456 / JCM 9403 / PLM1-5).